A 180-amino-acid polypeptide reads, in one-letter code: Large ribosomal subunit protein uL6 (180 aa).

This sequence belongs to the universal ribosomal protein uL6 family. Part of the 50S ribosomal subunit.

In terms of biological role, this protein binds to the 23S rRNA, and is important in its secondary structure. It is located near the subunit interface in the base of the L7/L12 stalk, and near the tRNA binding site of the peptidyltransferase center. In Clostridioides difficile (strain 630) (Peptoclostridium difficile), this protein is Large ribosomal subunit protein uL6.